The chain runs to 838 residues: Protein translocase subunit SecA (838 aa).

ATP-binding positions include Gln86, 104–108 (GEGKT), and Asp493. Residues 793 to 838 (NTQAVSGGEDSGKKKTKKPVVKSNTVKRNDPCPCGSGKKYKNCHGQ) form a disordered region. Zn(2+) contacts are provided by Cys824, Cys826, Cys835, and His836.

Belongs to the SecA family. Monomer and homodimer. Part of the essential Sec protein translocation apparatus which comprises SecA, SecYEG and auxiliary proteins SecDF. Other proteins may also be involved. Requires Zn(2+) as cofactor.

It localises to the cell membrane. The protein localises to the cytoplasm. It catalyses the reaction ATP + H2O + cellular proteinSide 1 = ADP + phosphate + cellular proteinSide 2.. Part of the Sec protein translocase complex. Interacts with the SecYEG preprotein conducting channel. Has a central role in coupling the hydrolysis of ATP to the transfer of proteins into and across the cell membrane, serving as an ATP-driven molecular motor driving the stepwise translocation of polypeptide chains across the membrane. The sequence is that of Protein translocase subunit SecA from Oceanobacillus iheyensis (strain DSM 14371 / CIP 107618 / JCM 11309 / KCTC 3954 / HTE831).